The primary structure comprises 267 residues: Chaperone protein MyfB (267 aa).

The first 34 residues, 1-34 (MKYKFSHNFISYNLFLFVFMSLILLPYSHASSMG), serve as a signal peptide directing secretion. Cysteine 127 and cysteine 164 are joined by a disulfide.

This sequence belongs to the periplasmic pilus chaperone family.

It is found in the periplasm. Functionally, required for the biogenesis of the MyfA fimbria. The polypeptide is Chaperone protein MyfB (myfB) (Yersinia enterocolitica).